Reading from the N-terminus, the 580-residue chain is Serine/threonine-protein kinase PINK1, mitochondrial (580 aa).

The N-terminal 77 residues, 1-77 (MAVRQALGRG…RFFRQSVAGL (77 aa)), are a transit peptide targeting the mitochondrion. The segment at 28–60 (VSGWGKPGPGAAWGRGERPGRVSSPGAQPRPLG) is disordered. The helical transmembrane segment at 94–110 (GPCGRAVFLAFGLGLGL) threads the bilayer. The tract at residues 111–117 (IEEKQAE) is required for outer membrane localization. The Protein kinase domain occupies 156–510 (YLIGQAIGKG…IAANVLHLSL (355 aa)). Residues 162 to 170 (IGKGCNAAV) and Lys218 contribute to the ATP site. Ser227 is subject to Phosphoserine; by autocatalysis. Asp361 functions as the Proton acceptor in the catalytic mechanism. Ser401 is modified (phosphoserine; by autocatalysis).

This sequence belongs to the protein kinase superfamily. Ser/Thr protein kinase family. As to quaternary structure, upon mitochondrial depolarization, it forms a supercomplex with TOM and TIM23 complexes. PINK1-TOM-TIM23 supercomplex formation requires PINK1 interaction with TOMM20 and TOMM70 and is critical for PINK1 stabilization at the outer mitochondrial membrane, kinase activation and downstream mitophagy. Upon mitochondrial depolarization, interacts with TIMM23; the interaction is required for PINK1 accumulation at the outer mitochondrial membrane, kinase activation by autophosphorylation and PRKN recruitement to mitochondria. Interacts with PRKN. Interacts with FBXO7. Forms a complex with PRKN and PARK7. Interacts with NENF. Mg(2+) is required as a cofactor. Post-translationally, proteolytically cleaved. In healthy cells, the precursor is continuously imported into the inner mitochondrial membrane (IMM), where it is proteolytically cleaved by mitochondrial-processing peptidase (MPP) and then undergoes further proteolytic cleavage by PARL or AFG3L2 to give rise to the 52 kDa short form. The 52 kDa short form is then released into the cytosol where it rapidly undergoes proteasome-dependent degradation. In unhealthy cells, when cellular stress conditions lead to the loss of mitochondrial membrane potential, mitochondrial import is impaired leading to the precursor accumulating on the outer mitochondrial membrane (OMM). If accumulation at the OMM fails and it is imported into the depolarized mitochondria, it undergoes cleavage by the IMM protease OMA1, promoting its subsequent degradation by the proteasome. In terms of processing, autophosphorylated. Loss of mitochondrial membrane potential results in the precursor accumulating on the outer mitochondrial membrane (OMM) where it is activated by autophosphorylation. Autophosphorylation at Ser-227 and Ser-401 is sufficient and essential for selective recruitment of PRKN to depolarized mitochondria, via PINK1-dependent phosphorylation of ubiquitin and maybe PRKN.

Its subcellular location is the mitochondrion outer membrane. The protein resides in the mitochondrion inner membrane. The protein localises to the cytoplasm. It is found in the cytosol. It carries out the reaction L-seryl-[protein] + ATP = O-phospho-L-seryl-[protein] + ADP + H(+). The catalysed reaction is L-threonyl-[protein] + ATP = O-phospho-L-threonyl-[protein] + ADP + H(+). Functionally, serine/threonine-protein kinase which acts as a sensor of mitochondrial damage and protects against mitochondrial dysfunction during cellular stress. It phosphorylates mitochondrial proteins to coordinate mitochondrial quality control mechanisms that remove and replace dysfunctional mitochondrial components. Depending on the severity of mitochondrial damage, activity ranges from preventing apoptosis and stimulating mitochondrial biogenesis to eliminating severely damaged mitochondria via PINK1-PRKN-dependent mitophagy. When cellular stress results in irreversible mitochondrial damage, PINK1 accumulates at the outer mitochondrial membrane (OMM) where it phosphorylates pre-existing polyubiquitin chains at 'Ser-65', recruits PRKN from the cytosol to the OMM and activates PRKN by phosphorylation at 'Ser-65'; activated PRKN then ubiquinates VDAC1 and other OMM proteins to initiate mitophagy. The PINK1-PRKN pathway also promotes fission of damaged mitochondria through phosphorylation and PRKN-dependent degradation of mitochondrial proteins involved in fission such as MFN2. This prevents the refusion of unhealthy mitochondria with the mitochondrial network or initiates mitochondrial fragmentation facilitating their later engulfment by autophagosomes. Also promotes mitochondrial fission independently of PRKN and ATG7-mediated mitophagy, via the phosphorylation and activation of DNM1L. Regulates motility of damaged mitochondria by promoting the ubiquitination and subsequent degradation of MIRO1 and MIRO2; in motor neurons, this likely inhibits mitochondrial intracellular anterograde transport along the axons which probably increases the chance of the mitochondria undergoing mitophagy in the soma. Required for ubiquinone reduction by mitochondrial complex I by mediating phosphorylation of complex I subunit NDUFA10. Phosphorylates LETM1, positively regulating its mitochondrial calcium transport activity. The sequence is that of Serine/threonine-protein kinase PINK1, mitochondrial from Rattus norvegicus (Rat).